A 313-amino-acid polypeptide reads, in one-letter code: tRNA-cytidine(32) 2-sulfurtransferase (313 aa).

Residues 50-55 (SGGKDS) carry the PP-loop motif motif. [4Fe-4S] cluster is bound by residues Cys-125, Cys-128, and Cys-216.

This sequence belongs to the TtcA family. In terms of assembly, homodimer. Mg(2+) is required as a cofactor. [4Fe-4S] cluster serves as cofactor.

It is found in the cytoplasm. The enzyme catalyses cytidine(32) in tRNA + S-sulfanyl-L-cysteinyl-[cysteine desulfurase] + AH2 + ATP = 2-thiocytidine(32) in tRNA + L-cysteinyl-[cysteine desulfurase] + A + AMP + diphosphate + H(+). It functions in the pathway tRNA modification. Functionally, catalyzes the ATP-dependent 2-thiolation of cytidine in position 32 of tRNA, to form 2-thiocytidine (s(2)C32). The sulfur atoms are provided by the cysteine/cysteine desulfurase (IscS) system. This chain is tRNA-cytidine(32) 2-sulfurtransferase, found in Haemophilus influenzae (strain ATCC 51907 / DSM 11121 / KW20 / Rd).